Consider the following 57-residue polypeptide: DNA-directed RNA polymerase subunit Rpo6 (57 aa).

The protein belongs to the archaeal Rpo6/eukaryotic RPB6 RNA polymerase subunit family. Part of the RNA polymerase complex.

The protein resides in the cytoplasm. Its subcellular location is the chromosome. The enzyme catalyses RNA(n) + a ribonucleoside 5'-triphosphate = RNA(n+1) + diphosphate. Its function is as follows. DNA-dependent RNA polymerase (RNAP) catalyzes the transcription of DNA into RNA using the four ribonucleoside triphosphates as substrates. This is DNA-directed RNA polymerase subunit Rpo6 from Thermococcus kodakarensis (strain ATCC BAA-918 / JCM 12380 / KOD1) (Pyrococcus kodakaraensis (strain KOD1)).